The primary structure comprises 69 residues: Large ribosomal subunit protein bL31 (69 aa).

Positions 17, 19, 37, and 40 each coordinate Zn(2+).

The protein belongs to the bacterial ribosomal protein bL31 family. Type A subfamily. As to quaternary structure, part of the 50S ribosomal subunit. It depends on Zn(2+) as a cofactor.

In terms of biological role, binds the 23S rRNA. The sequence is that of Large ribosomal subunit protein bL31 from Clostridium novyi (strain NT).